We begin with the raw amino-acid sequence, 1070 residues long: DNA-directed RNA polymerase subunit beta (1070 aa).

The protein belongs to the RNA polymerase beta chain family. In terms of assembly, in plastids the minimal PEP RNA polymerase catalytic core is composed of four subunits: alpha, beta, beta', and beta''. When a (nuclear-encoded) sigma factor is associated with the core the holoenzyme is formed, which can initiate transcription.

It localises to the plastid. The protein resides in the chloroplast. The enzyme catalyses RNA(n) + a ribonucleoside 5'-triphosphate = RNA(n+1) + diphosphate. Functionally, DNA-dependent RNA polymerase catalyzes the transcription of DNA into RNA using the four ribonucleoside triphosphates as substrates. The polypeptide is DNA-directed RNA polymerase subunit beta (Solanum bulbocastanum (Wild potato)).